The chain runs to 375 residues: Anhydro-N-acetylmuramic acid kinase (375 aa).

14 to 21 (GTSMDGAD) is a binding site for ATP.

It belongs to the anhydro-N-acetylmuramic acid kinase family.

The enzyme catalyses 1,6-anhydro-N-acetyl-beta-muramate + ATP + H2O = N-acetyl-D-muramate 6-phosphate + ADP + H(+). Its pathway is amino-sugar metabolism; 1,6-anhydro-N-acetylmuramate degradation. It functions in the pathway cell wall biogenesis; peptidoglycan recycling. In terms of biological role, catalyzes the specific phosphorylation of 1,6-anhydro-N-acetylmuramic acid (anhMurNAc) with the simultaneous cleavage of the 1,6-anhydro ring, generating MurNAc-6-P. Is required for the utilization of anhMurNAc either imported from the medium or derived from its own cell wall murein, and thus plays a role in cell wall recycling. The sequence is that of Anhydro-N-acetylmuramic acid kinase from Cupriavidus pinatubonensis (strain JMP 134 / LMG 1197) (Cupriavidus necator (strain JMP 134)).